The primary structure comprises 157 residues: SUMO-conjugating enzyme UBC9 (157 aa).

Serine 2 is modified (N-acetylserine). The UBC core domain maps to leucine 4–lysine 157. The active-site Glycyl thioester intermediate is cysteine 93.

Belongs to the ubiquitin-conjugating enzyme family. In terms of assembly, interacts with SIZ1.

Its subcellular location is the nucleus. Its pathway is protein modification; protein sumoylation. Functionally, E2 ubiquitin-like--protein ligase mediating SUMO/Smt3 attachment to septins and PCNA. Seems to be involved in degradation of S- (CLB5) and M-phase cyclins (CLB2). In Saccharomyces cerevisiae (strain ATCC 204508 / S288c) (Baker's yeast), this protein is SUMO-conjugating enzyme UBC9 (UBC9).